The chain runs to 336 residues: MLEARDLYCERDERTLFRGLSFTVDAGEWVQVTGGNGAGKTTLLRLLTGLARPDGGEVYWQGEPLRRVRDSFHRSLLWIGHQPGIKTRLTARENLHFFHPGDGARLPEALAQAGLAGFEDVPVARLSAGQQRRVALARLWLTRAALWVLDEPFTAIDVNGVARLTRRMAAHTAQGGMVILTTHQPLPGAADTVRRLALTTALVLYALRANIDLFYTPGEILYGKRETQQLPAVGQRLRVGGMVMPGSVRRDPDSLKVNFSLYDAEGSVTVSYEGILPDLFREGQGVVVQGTLEKGNHVLAHEVLAKHDENYTPPEVEKAMQENHRRPQRVDKDTSS.

Residues methionine 1–threonine 199 are cytochrome c biogenesis ATP-binding export protein CcmA 2. Positions leucine 2 to methionine 242 constitute an ABC transporter domain. An ATP-binding site is contributed by glycine 34–threonine 41. Residues leucine 196–serine 336 form a cytochrome c-type biogenesis protein CcmE 2 region. Histidine 307 and tyrosine 311 together coordinate heme. The disordered stretch occupies residues histidine 307–serine 336.

In the N-terminal section; belongs to the ABC transporter superfamily. CcmA exporter (TC 3.A.1.107) family. The protein in the C-terminal section; belongs to the CcmE/CycJ family.

It localises to the cell inner membrane. The catalysed reaction is heme b(in) + ATP + H2O = heme b(out) + ADP + phosphate + H(+). Functionally, part of the ABC transporter complex CcmAB involved in the biogenesis of c-type cytochromes; once thought to export heme, this seems not to be the case, but its exact role is uncertain. Responsible for energy coupling to the transport system. In terms of biological role, heme chaperone required for the biogenesis of c-type cytochromes. Transiently binds heme delivered by CcmC and transfers the heme to apo-cytochromes in a process facilitated by CcmF and CcmH. The chain is Putative bifunctional cytochrome c-type biogenesis protein CcmAE (ccmAE) from Salmonella choleraesuis (strain SC-B67).